Here is a 190-residue protein sequence, read N- to C-terminus: Protein GrpE (190 aa).

Disordered regions lie at residues 1–22 (MAEETNQSLEDQNVQVEEGQTI) and 170–190 (EEGESKQSIRPARVKVGKPQS). Positions 181–190 (ARVKVGKPQS) are enriched in basic residues.

Belongs to the GrpE family. As to quaternary structure, homodimer.

The protein resides in the cytoplasm. In terms of biological role, participates actively in the response to hyperosmotic and heat shock by preventing the aggregation of stress-denatured proteins, in association with DnaK and GrpE. It is the nucleotide exchange factor for DnaK and may function as a thermosensor. Unfolded proteins bind initially to DnaJ; upon interaction with the DnaJ-bound protein, DnaK hydrolyzes its bound ATP, resulting in the formation of a stable complex. GrpE releases ADP from DnaK; ATP binding to DnaK triggers the release of the substrate protein, thus completing the reaction cycle. Several rounds of ATP-dependent interactions between DnaJ, DnaK and GrpE are required for fully efficient folding. This chain is Protein GrpE, found in Leptospira biflexa serovar Patoc (strain Patoc 1 / Ames).